Reading from the N-terminus, the 470-residue chain is Sorting nexin-17 (470 aa).

The 109-residue stretch at 1-109 (MHFSIPETES…SFLRRAQQET (109 aa)) folds into the PX domain. Residues Arg-36, Ser-38, Lys-62, and Arg-75 each coordinate a 1,2-diacyl-sn-glycero-3-phospho-(1D-myo-inositol-3-phosphate). Positions 115–206 (EEVSLEVLLS…YKIVLRKSYW (92 aa)) constitute a Ras-associating domain. The interval 115-432 (EEVSLEVLLS…DASRESMVKL (318 aa)) is FERM-like. Residues 270–432 (GYLRFDACVA…DASRESMVKL (163 aa)) form a PTB-like F3 module region. Ser-336, Ser-407, Ser-409, Ser-415, Ser-421, Ser-437, and Ser-440 each carry phosphoserine. Residues 400-426 (VGGTLRRSDSQQAVKSPPLLESPDASR) form a disordered region.

Belongs to the sorting nexin family. As to quaternary structure, monomer. Interacts with APP (via cytoplasmic YXNPXY motif). Interacts with KIF1B. Interacts with the C-termini of P-selectin, PTC, LDLR, VLDLR, LRP1 and LRP8. Interacts with KRIT1 (via N-terminus). Interacts with HRAS. Interacts with ITGB1 and ITGB5 (via NPxY motif). Interacts with CCDC22 and CCDC93; the interaction associates SNX17 with the CCC complex. Interacts (via C-terminus) with VPS26C and VPS35L; the interactions are direct and associate SNX17 with the retriever complex.

It localises to the cytoplasm. The protein localises to the early endosome. The protein resides in the cytoplasmic vesicle membrane. Critical regulator of endosomal recycling of numerous surface proteins, including integrins, signaling receptor and channels. Binds to NPxY sequences in the cytoplasmic tails of target cargos. Associates with retriever and CCC complexes to prevent lysosomal degradation and promote cell surface recycling of numerous cargos such as integrins ITGB1, ITGB5 and their associated alpha subunits. Also required for maintenance of normal cell surface levels of APP and LRP1. Interacts with membranes containing phosphatidylinositol 3-phosphate (PtdIns(3P)). This Bos taurus (Bovine) protein is Sorting nexin-17 (SNX17).